We begin with the raw amino-acid sequence, 153 residues long: Cytochrome c-type biogenesis protein CcmE (153 aa).

Residues 1–8 (MTTRRGRR) lie on the Cytoplasmic side of the membrane. Residues 9–29 (ALLIAGGVGLLALAAALVLNA) traverse the membrane as a helical; Signal-anchor for type II membrane protein segment. At 30–153 (LRSNLVFFFS…PSATLQTEAR (124 aa)) the chain is on the periplasmic side. His-124 and Tyr-128 together coordinate heme.

The protein belongs to the CcmE/CycJ family.

The protein localises to the cell inner membrane. In terms of biological role, heme chaperone required for the biogenesis of c-type cytochromes. Transiently binds heme delivered by CcmC and transfers the heme to apo-cytochromes in a process facilitated by CcmF and CcmH. This is Cytochrome c-type biogenesis protein CcmE from Bordetella parapertussis (strain 12822 / ATCC BAA-587 / NCTC 13253).